We begin with the raw amino-acid sequence, 181 residues long: MTMEMHATTIFAVQHQGQSAMCGDGQVTLGNSVVMKHKAKKVRTLYNGKVLAGFAGSVADAFTLFEKFETKLQSFNGNLTRASVELAQEWRSDKVLRKLEAMLIVMNKEHMYLVSGTGEVIEPDDGILAIGSGGNYALSAGRALVRYADNMSAADIARSALEVAGEICVFTNDQITLEVLE.

The active site involves Thr-8. Residues Gly-165, Cys-168, and Thr-171 each contribute to the Na(+) site.

This sequence belongs to the peptidase T1B family. HslV subfamily. A double ring-shaped homohexamer of HslV is capped on each side by a ring-shaped HslU homohexamer. The assembly of the HslU/HslV complex is dependent on binding of ATP.

The protein resides in the cytoplasm. The enzyme catalyses ATP-dependent cleavage of peptide bonds with broad specificity.. Allosterically activated by HslU binding. Its function is as follows. Protease subunit of a proteasome-like degradation complex believed to be a general protein degrading machinery. The chain is ATP-dependent protease subunit HslV from Oceanobacillus iheyensis (strain DSM 14371 / CIP 107618 / JCM 11309 / KCTC 3954 / HTE831).